Consider the following 117-residue polypeptide: Large ribosomal subunit protein uL18 (117 aa).

Residues 1-17 are compositionally biased toward basic residues; it reads MNLSRNKARKVKQKRLR. A disordered region spans residues 1–23; sequence MNLSRNKARKVKQKRLRAKSELS.

It belongs to the universal ribosomal protein uL18 family. As to quaternary structure, part of the 50S ribosomal subunit; part of the 5S rRNA/L5/L18/L25 subcomplex. Contacts the 5S and 23S rRNAs.

This is one of the proteins that bind and probably mediate the attachment of the 5S RNA into the large ribosomal subunit, where it forms part of the central protuberance. The chain is Large ribosomal subunit protein uL18 from Mycoplasmopsis synoviae (strain 53) (Mycoplasma synoviae).